The sequence spans 619 residues: MSKSKCSVGPMSSVVAPAKEPNAVGPREVELILVKEQNGVQLTNSTLINPPQTPVEVQERETWSKKIDFLLSVIGFAVDLANVWRFPYLCYKNGGGAFLVPYLLFMVIAGMPLFYMELALGQFNREGAAGVWKICPVLKGVGFTVILISFYVGFFYNVIIAWALHYFFSSFTMDLPWIHCNNTWNSPNCSDAHSSNSSDGLGLNDTFGTTPAAEYFERGVLHLHQSRGIDDLGPPRWQLTACLVLVIVLLYFSLWKGVKTSGKVVWITATMPYVVLTALLLRGVTLPGAMDGIRAYLSVDFYRLCEASVWIDAATQVCFSLGVGFGVLIAFSSYNKFTNNCYRDAIITTSINSLTSFSSGFVVFSFLGYMAQKHNVPIRDVATDGPGLIFIIYPEAIATLPLSSAWAAVFFLMLLTLGIDSAMGGMESVITGLVDEFQLLHRHRELFTLGIVLATFLLSLFCVTNGGIYVFTLLDHFAAGTSILFGVLIEAIGVAWFYGVQQFSDDIKQMTGQRPNLYWRLCWKLVSPCFLLYVVVVSIVTFRPPHYGAYIFPDWANALGWIIATSSMAMVPIYATYKFCSLPGSFREKLAYAITPEKDRQLVDRGEVRQFTLRHWLLV.

The Cytoplasmic segment spans residues 1-56 (MSKSKCSVGPMSSVVAPAKEPNAVGPREVELILVKEQNGVQLTNSTLINPPQTPVE). A discontinuously helical membrane pass occupies residues 57-95 (VQERETWSKKIDFLLSVIGFAVDLANVWRFPYLCYKNGG). Residues glycine 75, alanine 77, valine 78, aspartate 79, and asparagine 82 each coordinate Na(+). Aspartate 79 contacts dopamine. 2 helical membrane passes run 96 to 127 (GAFLVPYLLFMVIAGMPLFYMELALGQFNREG) and 128 to 171 (AAGV…FSSF). Residues serine 149 and glycine 153 each coordinate dopamine. Residues 172–235 (TMDLPWIHCN…SRGIDDLGPP (64 aa)) lie on the Extracellular side of the membrane. A disulfide bond links cysteine 180 and cysteine 189. N-linked (GlcNAc...) asparagine glycans are attached at residues asparagine 181, asparagine 188, asparagine 196, and asparagine 204. 2 consecutive transmembrane segments (helical) span residues 236–255 (RWQLTACLVLVIVLLYFSLW) and 256–286 (KGVKTSGKVVWITATMPYVVLTALLLRGVTL). Residues 287–305 (PGAMDGIRAYLSVDFYRLC) lie on the Extracellular side of the membrane. Residues 306-334 (EASVWIDAATQVCFSLGVGFGVLIAFSSY) traverse the membrane as a discontinuously helical segment. Position 316 (glutamine 316) interacts with chloride. Residue phenylalanine 319 participates in dopamine binding. Positions 320 and 352 each coordinate Na(+). Serine 320 is a binding site for chloride. Residues 335–375 (NKFTNNCYRDAIITTSINSLTSFSSGFVVFSFLGYMAQKHN) traverse the membrane as a helical segment. Serine 356 contacts chloride. Topologically, residues 376-399 (VPIRDVATDGPGLIFIIYPEAIAT) are extracellular. A run of 3 helical transmembrane segments spans residues 400–441 (LPLS…QLLH), 442–465 (RHRELFTLGIVLATFLLSLFCVTN), and 466–498 (GGIYVFTLLDHFAAGTSILFGVLIEAIGVAWFY). Residues leucine 417, aspartate 420, and serine 421 each coordinate Na(+). Residues serine 421 and alanine 422 each coordinate dopamine. Over 499–515 (GVQQFSDDIKQMTGQRP) the chain is Cytoplasmic. A helical transmembrane segment spans residues 516 to 541 (NLYWRLCWKLVSPCFLLYVVVVSIVT). Over 542 to 552 (FRPPHYGAYIF) the chain is Extracellular. A helical membrane pass occupies residues 553–582 (PDWANALGWIIATSSMAMVPIYATYKFCSL). Residues 560-589 (GWIIATSSMAMVPIYATYKFCSLPGSFREK) are interaction with TGFB1I1. Residues 583 to 619 (PGSFREKLAYAITPEKDRQLVDRGEVRQFTLRHWLLV) are Cytoplasmic-facing.

Belongs to the sodium:neurotransmitter symporter (SNF) (TC 2.A.22) family. SLC6A3 subfamily. As to quaternary structure, monomer. Homooligomer; disulfide-linked. Interacts with PRKCABP and TGFB1I1. Interacts (via N-terminus) with SYNGR3 (via N-terminus). Interacts with SLC18A2. Interacts with TOR1A (ATP-bound); TOR1A regulates SLC6A3 subcellular location. Interacts with alpha-synuclein/SNCA. Interacts with SEPTIN4. Found in the substantia nigra and ventral tegmental dopamine neurons, in fibers of the medial forebrain bundle ascending into the striatum, and within dense fiber networks and varicosities in the dorsal and ventral striatum (at protein level). Lower expression in the cortex (at protein level). Absent from the corpus callosum. Expressed throughout the retina at postnatal day 8.

Its subcellular location is the cell membrane. The protein resides in the cell projection. The protein localises to the neuron projection. It localises to the axon. It catalyses the reaction dopamine(out) + chloride(out) + Na(+)(out) = dopamine(in) + chloride(in) + Na(+)(in). The enzyme catalyses (R)-noradrenaline(out) + chloride(out) + Na(+)(out) = (R)-noradrenaline(in) + chloride(in) + Na(+)(in). The catalysed reaction is dopamine(out) + chloride(out) + 2 Na(+)(out) = dopamine(in) + chloride(in) + 2 Na(+)(in). Inhibited by amphetamine, bupropion, cocaine and ritalin. Inhibited by zinc ions. Functionally, mediates sodium- and chloride-dependent transport of dopamine. Also mediates sodium- and chloride-dependent transport of norepinephrine (also known as noradrenaline). Regulator of light-dependent retinal hyaloid vessel regression, downstream of OPN5 signaling. The chain is Sodium-dependent dopamine transporter (Slc6a3) from Mus musculus (Mouse).